The chain runs to 346 residues: D-fructose 1,6-bisphosphatase class 2/sedoheptulose 1,7-bisphosphatase (346 aa).

Mn(2+)-binding residues include aspartate 33, glutamate 57, aspartate 97, and glutamate 100. Substrate contacts are provided by residues 100 to 102 (EGT), tyrosine 131, 176 to 178 (RDR), and 198 to 200 (DGD). Glutamate 225 is a Mn(2+) binding site.

Belongs to the FBPase class 2 family. As to quaternary structure, homotetramer. It depends on Mn(2+) as a cofactor.

The catalysed reaction is beta-D-fructose 1,6-bisphosphate + H2O = beta-D-fructose 6-phosphate + phosphate. It catalyses the reaction D-sedoheptulose 1,7-bisphosphate + H2O = D-sedoheptulose 7-phosphate + phosphate. The protein operates within carbohydrate biosynthesis; Calvin cycle. In terms of biological role, catalyzes the hydrolysis of fructose 1,6-bisphosphate (Fru 1,6-P2) and sedoheptulose 1,7-bisphosphate (Sed 1,7-P2) to fructose 6-phosphate and sedoheptulose 7-phosphate, respectively. The sequence is that of D-fructose 1,6-bisphosphatase class 2/sedoheptulose 1,7-bisphosphatase from Gloeobacter violaceus (strain ATCC 29082 / PCC 7421).